We begin with the raw amino-acid sequence, 337 residues long: Dihydroorotate dehydrogenase (quinone) (337 aa).

FMN is bound by residues 58 to 62 (AGLDK) and Thr82. Lys62 contacts substrate. Residue 107–111 (NCMGF) coordinates substrate. Positions 137 and 170 each coordinate FMN. Asn170 lines the substrate pocket. The active-site Nucleophile is the Ser173. Asn175 contributes to the substrate binding site. FMN-binding residues include Lys215 and Thr243. 244 to 245 (NT) lines the substrate pocket. FMN contacts are provided by residues Gly266, Gly294, and 315-316 (YS).

This sequence belongs to the dihydroorotate dehydrogenase family. Type 2 subfamily. In terms of assembly, monomer. It depends on FMN as a cofactor.

The protein localises to the cell membrane. It carries out the reaction (S)-dihydroorotate + a quinone = orotate + a quinol. It functions in the pathway pyrimidine metabolism; UMP biosynthesis via de novo pathway; orotate from (S)-dihydroorotate (quinone route): step 1/1. Functionally, catalyzes the conversion of dihydroorotate to orotate with quinone as electron acceptor. This chain is Dihydroorotate dehydrogenase (quinone), found in Dichelobacter nodosus (strain VCS1703A).